A 352-amino-acid chain; its full sequence is Molybdenum import ATP-binding protein ModC (352 aa).

An ABC transporter domain is found at 1-229 (MLELNFSQTL…SVMNPWLPKE (229 aa)). 31–38 (GVSGAGKT) contributes to the ATP binding site. A Mop domain is found at 289 to 352 (QTSIRNVLRA…AQIKSVSITA (64 aa)).

This sequence belongs to the ABC transporter superfamily. Molybdate importer (TC 3.A.1.8) family. In terms of assembly, the complex is composed of two ATP-binding proteins (ModC), two transmembrane proteins (ModB) and a solute-binding protein (ModA).

Its subcellular location is the cell inner membrane. The catalysed reaction is molybdate(out) + ATP + H2O = molybdate(in) + ADP + phosphate + H(+). In terms of biological role, part of the ABC transporter complex ModABC involved in molybdenum import. Responsible for energy coupling to the transport system. This is Molybdenum import ATP-binding protein ModC from Shigella flexneri.